The primary structure comprises 159 residues: Small ribosomal subunit protein uS7 (159 aa).

Belongs to the universal ribosomal protein uS7 family. As to quaternary structure, part of the 30S ribosomal subunit. Contacts proteins S9 and S11.

One of the primary rRNA binding proteins, it binds directly to 16S rRNA where it nucleates assembly of the head domain of the 30S subunit. Is located at the subunit interface close to the decoding center, probably blocks exit of the E-site tRNA. In Wolbachia sp. subsp. Brugia malayi (strain TRS), this protein is Small ribosomal subunit protein uS7.